Consider the following 609-residue polypeptide: MSSKHWNYKQDLVHAHLKGLCHANPDLQFIESERVVINKHSKPDKVMILSGGGSGHEPLHAGFVGEGCLDVGVAGFVFASPSTKQIVSGLKAKPSDKGTLIVVKNYTGDILHFGLAAERAKAEGVPVELLIVQDDVSVGRTKNGMVGRRGLAGTSLVHKIVGAKAAKDSNKASLSEVYQLGEAVVANLVTIGASLDHCTIPGNRHHESESDDEDEQKHLLKEDEIEVGMGIHNESGIKRVSPIPTIDTLVADLLKYLLDKSDEERHYVDFDSSDEVVLMINNLGGTSNLELYAIQNTVVEQLATDYKIKPARVYTGAYTTSLDGPGFSITLLNVTRAGGKEVFDCLDYPTKVPGWNSSYTTAEWAAKSESFVIDAPPVSDASATSKVRFSSSTVKAVLESGCKKLLTKEPKITLYDTVAGDGDCGETLANGAHAILDLLAADKLEITDGVRSLTQITDVVETAMGGTSGGLYSIFISALAKSLKDRELQQGGYEVTPQILAASLKDALESLYRYTRARAGDRTLIDALAPFVEQFAASKGDLNQANKACHEGAESTRKLKAKFGRASYVSEEEFKPFEAEGGLPDPGAIGLAALVDGFAEAYSKIGSNL.

Residues 8 to 355 (YKQDLVHAHL…LDYPTKVPGW (348 aa)) enclose the DhaK domain. Residues 53–56 (GSGH), K104, and D109 contribute to the substrate site. Residue H232 is the Tele-hemiaminal-histidine intermediate of the active site. Residues 392–600 (STVKAVLESG…LAALVDGFAE (209 aa)) form the DhaL domain. Residues 421 to 424 (DGDC), 467 to 468 (TS), 523 to 524 (TL), and 585 to 587 (DPG) contribute to the ATP site.

This sequence belongs to the dihydroxyacetone kinase (DAK) family.

The catalysed reaction is dihydroxyacetone + ATP = dihydroxyacetone phosphate + ADP + H(+). The enzyme catalyses D-glyceraldehyde + ATP = D-glyceraldehyde 3-phosphate + ADP + H(+). It functions in the pathway polyol metabolism; glycerol fermentation; glycerone phosphate from glycerol (oxidative route): step 2/2. Catalyzes both the phosphorylation of dihydroxyacetone and of glyceraldehyde. This Pichia angusta (Yeast) protein is Dihydroxyacetone kinase (DAK).